We begin with the raw amino-acid sequence, 101 residues long: Peroxisomal biogenesis factor 39 (101 aa).

The protein localises to the peroxisome. In terms of biological role, may be a peroxin involved in the PTS2-mediated protein import pathway. The protein is Peroxisomal biogenesis factor 39 of Homo sapiens (Human).